Reading from the N-terminus, the 322-residue chain is uncharacterized protein (322 aa).

The next 9 helical transmembrane spans lie at 5-25 (LISI…IPGI), 37-57 (IGPS…FKET), 71-91 (LPLL…LTSF), 109-129 (MMYV…MPFI), 153-173 (SFKM…LPFV), 189-209 (LFSL…VIMI), 245-265 (LLLI…APDI), 268-288 (PITI…ATFV), and 300-320 (IYPI…FALL).

Its subcellular location is the cell membrane. This is an uncharacterized protein from Methanocaldococcus jannaschii (strain ATCC 43067 / DSM 2661 / JAL-1 / JCM 10045 / NBRC 100440) (Methanococcus jannaschii).